The chain runs to 347 residues: NADH-quinone oxidoreductase subunit H (347 aa).

9 helical membrane passes run 22-42, 59-79, 93-113, 124-144, 171-191, 198-218, 240-260, 285-305, and 321-341; these read GVVSIKVIALIICLLLATAYL, PSLAGPFGLLQPIADAVKLVF, FIIAPIITFVLSLLGWSVIPI, IGGILFILAVTSLGVYGIIIA, MALSIVAVLIVTGEMDLIQIV, PIWLTIMMLPLAVIYFISILA, VEYSSMAFAMFFLGEYANMIL, IPGYIWFILKVSMVLFCFLWI, and GLKVFLPIVLAWIIVVSAILV.

This sequence belongs to the complex I subunit 1 family. As to quaternary structure, NDH-1 is composed of 14 different subunits. Subunits NuoA, H, J, K, L, M, N constitute the membrane sector of the complex.

The protein localises to the cell inner membrane. It catalyses the reaction a quinone + NADH + 5 H(+)(in) = a quinol + NAD(+) + 4 H(+)(out). In terms of biological role, NDH-1 shuttles electrons from NADH, via FMN and iron-sulfur (Fe-S) centers, to quinones in the respiratory chain. The immediate electron acceptor for the enzyme in this species is believed to be ubiquinone. Couples the redox reaction to proton translocation (for every two electrons transferred, four hydrogen ions are translocated across the cytoplasmic membrane), and thus conserves the redox energy in a proton gradient. This subunit may bind ubiquinone. The polypeptide is NADH-quinone oxidoreductase subunit H (Orientia tsutsugamushi (strain Ikeda) (Rickettsia tsutsugamushi)).